We begin with the raw amino-acid sequence, 360 residues long: Aminomethyltransferase (360 aa).

This sequence belongs to the GcvT family. In terms of assembly, the glycine cleavage system is composed of four proteins: P, T, L and H.

It carries out the reaction N(6)-[(R)-S(8)-aminomethyldihydrolipoyl]-L-lysyl-[protein] + (6S)-5,6,7,8-tetrahydrofolate = N(6)-[(R)-dihydrolipoyl]-L-lysyl-[protein] + (6R)-5,10-methylene-5,6,7,8-tetrahydrofolate + NH4(+). The glycine cleavage system catalyzes the degradation of glycine. This chain is Aminomethyltransferase, found in Pseudomonas aeruginosa (strain ATCC 15692 / DSM 22644 / CIP 104116 / JCM 14847 / LMG 12228 / 1C / PRS 101 / PAO1).